The sequence spans 342 residues: Ribosomal RNA small subunit methyltransferase C (342 aa).

Belongs to the methyltransferase superfamily. RsmC family. Monomer.

It localises to the cytoplasm. The catalysed reaction is guanosine(1207) in 16S rRNA + S-adenosyl-L-methionine = N(2)-methylguanosine(1207) in 16S rRNA + S-adenosyl-L-homocysteine + H(+). Its function is as follows. Specifically methylates the guanine in position 1207 of 16S rRNA in the 30S particle. In Salmonella paratyphi A (strain ATCC 9150 / SARB42), this protein is Ribosomal RNA small subunit methyltransferase C.